A 638-amino-acid polypeptide reads, in one-letter code: DNA mismatch repair protein MutL (638 aa).

Residues 398-435 (GREGTSFGTQTNAFGSMATPRDNSRGSYSAGESRQRTE) are disordered.

It belongs to the DNA mismatch repair MutL/HexB family.

Functionally, this protein is involved in the repair of mismatches in DNA. It is required for dam-dependent methyl-directed DNA mismatch repair. May act as a 'molecular matchmaker', a protein that promotes the formation of a stable complex between two or more DNA-binding proteins in an ATP-dependent manner without itself being part of a final effector complex. This is DNA mismatch repair protein MutL from Shewanella baltica (strain OS155 / ATCC BAA-1091).